The primary structure comprises 283 residues: Phosphatidylserine decarboxylase proenzyme (283 aa).

Active-site charge relay system; for autoendoproteolytic cleavage activity residues include Asp89, His146, and Ser249. The active-site Schiff-base intermediate with substrate; via pyruvic acid; for decarboxylase activity is the Ser249. Ser249 is subject to Pyruvic acid (Ser); by autocatalysis.

This sequence belongs to the phosphatidylserine decarboxylase family. PSD-B subfamily. Prokaryotic type I sub-subfamily. As to quaternary structure, heterodimer of a large membrane-associated beta subunit and a small pyruvoyl-containing alpha subunit. Pyruvate is required as a cofactor. In terms of processing, is synthesized initially as an inactive proenzyme. Formation of the active enzyme involves a self-maturation process in which the active site pyruvoyl group is generated from an internal serine residue via an autocatalytic post-translational modification. Two non-identical subunits are generated from the proenzyme in this reaction, and the pyruvate is formed at the N-terminus of the alpha chain, which is derived from the carboxyl end of the proenzyme. The autoendoproteolytic cleavage occurs by a canonical serine protease mechanism, in which the side chain hydroxyl group of the serine supplies its oxygen atom to form the C-terminus of the beta chain, while the remainder of the serine residue undergoes an oxidative deamination to produce ammonia and the pyruvoyl prosthetic group on the alpha chain. During this reaction, the Ser that is part of the protease active site of the proenzyme becomes the pyruvoyl prosthetic group, which constitutes an essential element of the active site of the mature decarboxylase.

Its subcellular location is the cell membrane. The enzyme catalyses a 1,2-diacyl-sn-glycero-3-phospho-L-serine + H(+) = a 1,2-diacyl-sn-glycero-3-phosphoethanolamine + CO2. It participates in phospholipid metabolism; phosphatidylethanolamine biosynthesis; phosphatidylethanolamine from CDP-diacylglycerol: step 2/2. In terms of biological role, catalyzes the formation of phosphatidylethanolamine (PtdEtn) from phosphatidylserine (PtdSer). This is Phosphatidylserine decarboxylase proenzyme from Legionella pneumophila subsp. pneumophila (strain Philadelphia 1 / ATCC 33152 / DSM 7513).